The following is a 499-amino-acid chain: Glycerol kinase (499 aa).

Position 17 (Thr17) interacts with ADP. Thr17, Thr18, and Ser19 together coordinate ATP. Sn-glycerol 3-phosphate is bound at residue Thr17. Residue Arg21 coordinates ADP. The sn-glycerol 3-phosphate site is built by Arg87, Glu88, Tyr139, and Asp243. Glycerol contacts are provided by Arg87, Glu88, Tyr139, Asp243, and Gln244. ADP contacts are provided by Thr265 and Gly308. Residues Thr265, Gly308, Gln312, and Gly409 each coordinate ATP. ADP is bound by residues Gly409 and Asn413.

This sequence belongs to the FGGY kinase family.

The enzyme catalyses glycerol + ATP = sn-glycerol 3-phosphate + ADP + H(+). It functions in the pathway polyol metabolism; glycerol degradation via glycerol kinase pathway; sn-glycerol 3-phosphate from glycerol: step 1/1. Inhibited by fructose 1,6-bisphosphate (FBP). In terms of biological role, key enzyme in the regulation of glycerol uptake and metabolism. Catalyzes the phosphorylation of glycerol to yield sn-glycerol 3-phosphate. This Pseudomonas entomophila (strain L48) protein is Glycerol kinase.